A 252-amino-acid polypeptide reads, in one-letter code: 3-dehydroquinate dehydratase (252 aa).

Residues 46 to 48 (EWR) and Arg82 each bind 3-dehydroquinate. His143 functions as the Proton donor/acceptor in the catalytic mechanism. Lys170 acts as the Schiff-base intermediate with substrate in catalysis. The 3-dehydroquinate site is built by Arg212, Ser231, and Gln235.

This sequence belongs to the type-I 3-dehydroquinase family. Homodimer.

It carries out the reaction 3-dehydroquinate = 3-dehydroshikimate + H2O. Its pathway is metabolic intermediate biosynthesis; chorismate biosynthesis; chorismate from D-erythrose 4-phosphate and phosphoenolpyruvate: step 3/7. Its function is as follows. Involved in the third step of the chorismate pathway, which leads to the biosynthesis of aromatic amino acids. Catalyzes the cis-dehydration of 3-dehydroquinate (DHQ) and introduces the first double bond of the aromatic ring to yield 3-dehydroshikimate. In Listeria monocytogenes serotype 4b (strain F2365), this protein is 3-dehydroquinate dehydratase.